The primary structure comprises 424 residues: Phosphomethylpyrimidine synthase (424 aa).

Residues Asn66, Met95, Tyr124, His163, 185-187 (SRG), 226-229 (DGMR), and Glu265 each bind substrate. Zn(2+) is bound at residue His269. Phe292 provides a ligand contact to substrate. His333 serves as a coordination point for Zn(2+). Cys408, Cys411, and Cys415 together coordinate [4Fe-4S] cluster.

This sequence belongs to the ThiC family. It depends on [4Fe-4S] cluster as a cofactor.

The enzyme catalyses 5-amino-1-(5-phospho-beta-D-ribosyl)imidazole + S-adenosyl-L-methionine = 4-amino-2-methyl-5-(phosphooxymethyl)pyrimidine + CO + 5'-deoxyadenosine + formate + L-methionine + 3 H(+). The protein operates within cofactor biosynthesis; thiamine diphosphate biosynthesis. Functionally, catalyzes the synthesis of the hydroxymethylpyrimidine phosphate (HMP-P) moiety of thiamine from aminoimidazole ribotide (AIR) in a radical S-adenosyl-L-methionine (SAM)-dependent reaction. The chain is Phosphomethylpyrimidine synthase from Thermotoga neapolitana (strain ATCC 49049 / DSM 4359 / NBRC 107923 / NS-E).